The sequence spans 335 residues: Homeobox protein Hox-A1 (335 aa).

Positions 61 to 80 (IGSPHHHHHHHHRHPQPATY) are disordered. Over residues 64–75 (PHHHHHHHHRHP) the composition is skewed to basic residues. Residues 75–203 (PQPATYQTSG…PASETSSPAQ (129 aa)) are interaction with OGT. Residues 204-209 (TFDWMK) carry the Antp-type hexapeptide motif. Residues 229 to 288 (PNAVRTNFTTKQLTELEKEFHFNKYLTRARRVEIAASLQLNETQVKIWFQNRRMKQKKRE) constitute a DNA-binding region (homeobox). A disordered region spans residues 281–335 (RMKQKKREKEGLLPISPATPPGNDEKAEESSEKSSSSPCVPSPGSSTSDTLTTSH). Over residues 303–312 (NDEKAEESSE) the composition is skewed to basic and acidic residues. Low complexity predominate over residues 313–328 (KSSSSPCVPSPGSSTS).

This sequence belongs to the Antp homeobox family. Labial subfamily. As to quaternary structure, interacts with OGT (via TPR repeats domain); the interaction takes place mainly in the nucleus. Forms a DNA-binding heterodimer with transcription factor PBX1.

The protein localises to the nucleus. Sequence-specific transcription factor. Regulates multiple developmental processes including brainstem, inner and outer ear, abducens nerve and cardiovascular development and morphogenesis as well as cognition and behavior. Also part of a developmental regulatory system that provides cells with specific positional identities on the anterior-posterior axis. Acts on the anterior body structures. Seems to act in the maintenance and/or generation of hindbrain segments. Activates transcription in the presence of PBX1A and PKNOX1. In Homo sapiens (Human), this protein is Homeobox protein Hox-A1 (HOXA1).